The chain runs to 472 residues: FAD-dependent monooxygenase dpmaE (472 aa).

A signal peptide spans 1 to 24 (MSQRQFKVIIIGGSVTGLTLAHSL). FAD is bound by residues Glu35, Gly49, and Arg108. N-linked (GlcNAc...) asparagine glycosylation is found at Asn128 and Asn179. FAD-binding residues include Asp305 and Ala318. N-linked (GlcNAc...) asparagine glycosylation is present at Asn369. Residues 440-460 (LLPLMFTLPLLYFGLSWIVGI) traverse the membrane as a helical segment.

The protein belongs to the paxM FAD-dependent monooxygenase family. Requires FAD as cofactor.

The protein resides in the membrane. It participates in secondary metabolite biosynthesis; terpenoid biosynthesis. FAD-dependent monooxygenase; part of the gene cluster that mediates the biosynthesis of the diterpenoid pyrones subglutinols A and B. The first step of the pathway is the synthesis of the alpha-pyrone moiety by the polyketide synthase dpmaA via condensation of one acetyl-CoA starter unit with 3 malonyl-CoA units and 2 methylations. The alpha-pyrone is then combined with geranylgeranyl pyrophosphate (GGPP) formed by the GGPP synthase dpmaD through the action of the prenyltransferase dpmaC to yield a linear alpha-pyrone diterpenoid. Subsequent steps in the diterpenoid pyrone biosynthetic pathway involve the decalin core formation, which is initiated by the epoxidation of the C10-C11 olefin by the FAD-dependent oxidoreductase dpmaE, and is followed by a cyclization cascade catalyzed by the terpene cyclase dpmaB. The dehydrogenase dpmaF is then involved in tetrahydrofuran (THF) ring formation at the C5 unit to complete the formation of subglutinols A and B. The sequence is that of FAD-dependent monooxygenase dpmaE from Metarhizium anisopliae (Entomophthora anisopliae).